Here is a 206-residue protein sequence, read N- to C-terminus: uncharacterized protein (206 aa).

Residues 29 to 169 enclose the Nudix hydrolase domain; it reads YWHSTFHCWV…DGVFAEGFIV (141 aa). The short motif at 69-90 is the Nudix box element; the sequence is AGHIKSGESIEDGVRELKEELG. E84 and E88 together coordinate Mg(2+).

The protein belongs to the Nudix hydrolase family. The cofactor is Mg(2+).

This is an uncharacterized protein from Clostridium acetobutylicum (strain ATCC 824 / DSM 792 / JCM 1419 / IAM 19013 / LMG 5710 / NBRC 13948 / NRRL B-527 / VKM B-1787 / 2291 / W).